The following is a 1004-amino-acid chain: E3 ubiquitin-protein ligase NEDD4-like (1004 aa).

Positions 30–154 constitute a C2 domain; that stretch reads LASHHSRGLE…TEDPTMERPY (125 aa). 2 disordered regions span residues 207 to 230 and 272 to 407; these read SNDSASQHQEELPPPPLPPGWEEK and AAHR…TPSV. One can recognise a WW 1 domain in the interval 221–254; that stretch reads PPLPPGWEEKVDNLGRTYYVNHNNRSTQWHRPSL. Ser-341 bears the Phosphoserine mark. Thr-347 is subject to Phosphothreonine. 2 stretches are compositionally biased toward polar residues: residues 347–359 and 366–376; these read TPDSNGEQFSSLI and RLRSCSVTDTV. The residue at position 371 (Ser-371) is a Phosphoserine; by WNK1 and WNK4. Residue Thr-396 is modified to Phosphothreonine; by SGK1. The 34-residue stretch at 414 to 447 folds into the WW 2 domain; sequence PGLPSGWEERKDAKGRTYYVNHNNRTTTWTRPIM. The segment at 453–523 is disordered; the sequence is GASGSATNSN…YNSPKPQHKV (71 aa). A Phosphoserine modification is found at Ser-475. Phosphoserine; by SGK1 is present on Ser-477. Phosphoserine occurs at positions 478, 493, 504, 508, 512, and 516. A compositionally biased stretch (basic and acidic residues) spans 489 to 500; sequence GAKDSPIRRAVK. 2 consecutive WW domains span residues 526–559 and 577–610; these read SFLPPGWEMRIAPNGRPFFIDHNTKTTTWEDPRL and GPLPPGWEERIHLDGRTFYIDHNSKITQWEDPRL. The 335-residue stretch at 669 to 1003 folds into the HECT domain; the sequence is RPDVLKARLW…VENAQGFEGV (335 aa). Cys-971 acts as the Glycyl thioester intermediate in catalysis.

In terms of assembly, interacts with UBE2E3. Interacts with NDFIP1; this interaction activates the E3 ubiquitin-protein ligase. Interacts with NDFIP2; this interaction activates the E3 ubiquitin-protein ligase. Interacts (via WW domains) with SCN1A. Interacts (via WW domains) with SCN2A. Interacts (via WW domains) with SCN3A. Interacts (via WW domains) with SCN5A. Interacts (via WW domains) with SCN8A. Interacts (via WW domains) with SCN9A. Interacts (via WW domains) with SCN10A. Interacts (via WW domains) with CLCN5. Interacts with SMAD2. Interacts with SMAD3. Interacts with SMAD6. Interacts with SMAD7. The phosphorylated form interacts with 14-3-3 proteins. Interacts with TNK2. Interacts with WNK1. Interacts with SGK1. Interacts (via C2 domain) with NPC2. Interacts with ARRDC4. Interacts with KCNQ1; promotes internalization of KCNQ1. Interacts (via domains WW1, 3 and 4) with USP36; the interaction inhibits ubiquitination of, at least, NTRK1, KCNQ2 and KCNQ3 by NEDD4L. Interacts with PRRG4 (via cytoplasmic domain). Interacts with LDLRAD3; the interaction is direct. Interacts with UBE2D2. Interacts with TTYH2 and TTYH3. In terms of processing, phosphorylated; which impairs interaction with SCNN. Interaction with YWHAH inhibits dephosphorylation. Aldosterone induces Ser-477 phosphorylation by SGK1. Post-translationally, auto-ubiquitinated. Deubiquitinated by USP36, no effect on NEDD4L protein levels. Both proteins interact and regulate each other's ubiquitination levels. Highly expressed in liver and kidney. Also expressed in heart, brain and lung. Isoform 1 is expressed in kidney, lung and gut. Isoform 3 is ubiquitously expressed.

The protein localises to the cytoplasm. Its subcellular location is the golgi apparatus. It localises to the endosome. It is found in the multivesicular body. It catalyses the reaction S-ubiquitinyl-[E2 ubiquitin-conjugating enzyme]-L-cysteine + [acceptor protein]-L-lysine = [E2 ubiquitin-conjugating enzyme]-L-cysteine + N(6)-ubiquitinyl-[acceptor protein]-L-lysine.. The enzyme catalyses [E2 ubiquitin-conjugating enzyme]-S-ubiquitinyl-L-cysteine + [acceptor protein]-L-cysteine = [E2 ubiquitin-conjugating enzyme]-L-cysteine + [acceptor protein]-S-ubiquitinyl-L-cysteine.. Its pathway is protein modification; protein ubiquitination. Its activity is regulated as follows. Activated by NDFIP1- and NDFIP2-binding. Functionally, E3 ubiquitin-protein ligase that mediates the polyubiquitination of lysine and cysteine residues on target proteins and is thereby implicated in the regulation of various signaling pathways including autophagy, innate immunity or DNA repair. Inhibits TGF-beta signaling by triggering SMAD2 and TGFBR1 ubiquitination and proteasome-dependent degradation. Downregulates autophagy and cell growth by ubiquitinating and reducing cellular ULK1 or ASCT2 levels. Promotes ubiquitination and internalization of various plasma membrane channels such as ENaC, SCN2A/Nav1.2, SCN3A/Nav1.3, SCN5A/Nav1.5, SCN9A/Nav1.7, SCN10A/Nav1.8, KCNA3/Kv1.3, KCNH2, EAAT1, KCNQ2/Kv7.2, KCNQ3/Kv7.3 or CLC5. Promotes ubiquitination and degradation of SGK1 and TNK2. Ubiquitinates BRAT1 and this ubiquitination is enhanced in the presence of NDFIP1. Plays a role in dendrite formation by melanocytes. Involved in the regulation of TOR signaling. Ubiquitinates and regulates protein levels of NTRK1 once this one is activated by NGF. Plays a role in antiviral innate immunity by catalyzing 'Lys-29'-linked cysteine ubiquitination of TRAF3, resulting in enhanced 'Lys-48' and 'Lys-63'-linked ubiquitination of TRAF3. Ubiquitinates TTYH2 and TYYH3 and regulates protein levels of TTYH2. The sequence is that of E3 ubiquitin-protein ligase NEDD4-like (Nedd4l) from Mus musculus (Mouse).